Here is a 156-residue protein sequence, read N- to C-terminus: Small ribosomal subunit protein uS7 (156 aa).

The protein belongs to the universal ribosomal protein uS7 family. Part of the 30S ribosomal subunit. Contacts proteins S9 and S11.

In terms of biological role, one of the primary rRNA binding proteins, it binds directly to 16S rRNA where it nucleates assembly of the head domain of the 30S subunit. Is located at the subunit interface close to the decoding center, probably blocks exit of the E-site tRNA. This Vibrio cholerae serotype O1 (strain ATCC 39315 / El Tor Inaba N16961) protein is Small ribosomal subunit protein uS7.